Reading from the N-terminus, the 496-residue chain is Sodium/sialic acid symporter SiaT (496 aa).

Residues 1–7 lie on the Periplasmic side of the membrane; the sequence is MQLHDFG. Residues 8 to 29 form a helical membrane-spanning segment; it reads FINYAVLFGYLAAMLLVGVYFS. The Cytoplasmic portion of the chain corresponds to 30–46; the sequence is KRQKTADDYFRGGGRVP. A helical transmembrane segment spans residues 47–59; it reads GWAAGVSVFATTL. Na(+) is bound at residue Ala56. Thr58 contributes to the N-acetyl-alpha-neuraminate binding site. Position 59 (Leu59) interacts with Na(+). N-acetyl-alpha-neuraminate contacts are provided by Ser60, Thr63, and Gln82. At 60–76 the chain is on the periplasmic side; sequence SSITFMSIPAKAYTSDW. A helical transmembrane segment spans residues 77-92; sequence TFIIGQYLAIAILPLV. The Cytoplasmic portion of the chain corresponds to 93–116; it reads FYFYIPFFRKLKITSAYEYLEARF. Residues 117-144 traverse the membrane as a helical segment; the sequence is DVRSRLFASLSFMLFHIGRVAIITYLTV. Residue Arg135 coordinates N-acetyl-alpha-neuraminate. At 145 to 154 the chain is on the periplasmic side; the sequence is LALRPFMGID. The helical transmembrane segment at 155–172 threads the bilayer; that stretch reads PVVLIVLISLLCIIYTWM. The Cytoplasmic segment spans residues 173 to 174; sequence GG. Residues 175–199 traverse the membrane as a helical segment; it reads IEGVIWTDVIQGLLLSGGAVLIFIM. Position 182 (Asp182) interacts with Na(+). The Periplasmic segment spans residues 200–235; the sequence is ICFKVDGGISEIFTTTAQADKFFPTTQWRWSWTDST. A helical transmembrane segment spans residues 236–252; that stretch reads IPVLMIGFLFANIQQFT. Residues 253–272 lie on the Cytoplasmic side of the membrane; it reads ASQDVVQRYIVTDSIKETKR. Residues 273–292 traverse the membrane as a helical segment; it reads TLITNAKLVAIIPIFFFAIG. Residues 293-325 lie on the Periplasmic side of the membrane; the sequence is SALFVYYQQNPSLLPAGFNTGGILPLFIVTEMP. Residues 326 to 356 traverse the membrane as a helical segment; that stretch reads IGIAGLIIAAIFAAAQSSISSSLNSISSCFN. Residues Ala339, Ser342, Ser343, Ser345, and Ser346 each coordinate Na(+). At 357–374 the chain is on the cytoplasmic side; that stretch reads SDIYTRLSKSSPSPEQKM. A helical transmembrane segment spans residues 375-396; sequence KVAKLVIIVAGIFSSLAAIWLV. The Periplasmic portion of the chain corresponds to 397–403; it reads LSDEAEI. A helical membrane pass occupies residues 404 to 427; sequence WDAFNSLIGLMGGPMTGLFMLGIF. Topologically, residues 428 to 432 are cytoplasmic; that stretch reads VKRAN. A helical membrane pass occupies residues 433–453; that stretch reads AGSAVVGIIVSIIAVLAARYG. Over 454–457 the chain is Periplasmic; the sequence is SDLN. A helical transmembrane segment spans residues 458 to 479; the sequence is FFFYGVIGSMSVVIAGTITAPL. Over 480–496 the chain is Cytoplasmic; the sequence is FAPAKQLSLDDSETSEN.

Belongs to the sodium:solute symporter (SSF) (TC 2.A.21) family.

The protein localises to the cell inner membrane. The catalysed reaction is N-acetyl-alpha-neuraminate(out) + 2 Na(+)(out) = N-acetyl-alpha-neuraminate(in) + 2 Na(+)(in). With respect to regulation, both Na(+) sites regulate Neu5Ac transport. The binding energy of the second Na(+) ion may be used to allosterically stabilize the substrate without directly coordinating it. In the absence of external Na(+), the rate is reduced by 78%. Its function is as follows. Symporter that uses the Na(+) gradient as the driving force for the uptake of the sialic acid N-acetylneuraminic acid (Neu5Ac). It allows the use of host-derived Neu5Ac as an energy source by P.mirabilis. Also binds N-glycolylneuraminic acid (Neu5Gc) and ketodeoxynonulosonic acid (KDN). Shows the highest affinity for Neu5Ac and Neu5Gc, which commonly occupy the terminal non-reducing position of mammalian cell surface glycoconjugates. The protein is Sodium/sialic acid symporter SiaT of Proteus mirabilis (strain HI4320).